We begin with the raw amino-acid sequence, 261 residues long: 3-deoxy-manno-octulosonate cytidylyltransferase 1 (261 aa).

It belongs to the KdsB family.

The protein resides in the cytoplasm. It carries out the reaction 3-deoxy-alpha-D-manno-oct-2-ulosonate + CTP = CMP-3-deoxy-beta-D-manno-octulosonate + diphosphate. The protein operates within nucleotide-sugar biosynthesis; CMP-3-deoxy-D-manno-octulosonate biosynthesis; CMP-3-deoxy-D-manno-octulosonate from 3-deoxy-D-manno-octulosonate and CTP: step 1/1. It participates in bacterial outer membrane biogenesis; lipopolysaccharide biosynthesis. In terms of biological role, activates KDO (a required 8-carbon sugar) for incorporation into bacterial lipopolysaccharide in Gram-negative bacteria. The chain is 3-deoxy-manno-octulosonate cytidylyltransferase 1 from Burkholderia lata (strain ATCC 17760 / DSM 23089 / LMG 22485 / NCIMB 9086 / R18194 / 383).